A 570-amino-acid polypeptide reads, in one-letter code: nebramycin 5' synthase (570 aa).

Positions 1-354 (MRVLGLNGWP…AAAAVAVELG (354 aa)) are kae1-like. Residue Asp-12 participates in tobramycin binding. Residue His-14 is the Proton acceptor of the active site. Position 39 (Lys-39) interacts with ATP. Positions 114, 118, and 137 each coordinate Fe cation. Carbamoyl adenylate contacts are provided by Gln-139, Gly-168, and Glu-172. Positions 172 and 228 each coordinate tobramycin. The carbamoyl adenylate site is built by Gly-310 and Asn-314. Residue Asp-338 participates in Fe cation binding. The interval 367–570 (GPEFSPDQVR…PYLVTKDLRH (204 aa)) is yrdC-like. ATP is bound by residues Arg-418 and Arg-449. Residue 418-419 (RA) coordinates carbamoyl phosphate. Residues Arg-498 and 528 to 530 (NTS) contribute to the carbamoyl phosphate site.

The protein belongs to the NodU/CmcH family. Fe(2+) is required as a cofactor.

The catalysed reaction is tobramycin + carbamoyl phosphate + ATP + H2O = nebramycin 5' + AMP + phosphate + diphosphate + H(+). The enzyme catalyses kanamycin A + carbamoyl phosphate + ATP + H2O = 6''-O-carbamoylkanamycin A + AMP + phosphate + diphosphate + H(+). It carries out the reaction carbamoyl phosphate + ATP + H2O = carbamoyl adenylate + phosphate + diphosphate. It catalyses the reaction tobramycin + carbamoyl adenylate = nebramycin 5' + AMP + H(+). The catalysed reaction is carbamoyl adenylate + kanamycin A = 6''-O-carbamoylkanamycin A + AMP + H(+). Its pathway is antibiotic biosynthesis; kanamycin biosynthesis. The protein operates within antibiotic biosynthesis; tobramycin biosynthesis. Its activity is regulated as follows. ADP inhibits the formation of nebramycin 5'. Functionally, tobZ is involved in the biosynthesis of the 2-deoxystreptamine-containing aminoglycoside antibiotics such as nebramycin 5 and 6-O-carbamoylkanamycin. Catalyzes the hydrolysis of carbamoyl phosphate and its subsequent adenylation by ATP to yield O-carbamoyladenylate. Then it catalyzes the transfer of the carbamoyl moiety from O-carbamoyladenylate to the tobramycin 6-hydroxy group to yield nebramycin 5'. It catalyzes the same reaction with kanamycin A. These reactions are considerably slower in the presence of deoxy-ATP. This is nebramycin 5' synthase (tobZ) from Streptoalloteichus tenebrarius (strain ATCC 17920 / DSM 40477 / JCM 4838 / CBS 697.72 / NBRC 16177 / NCIMB 11028 / NRRL B-12390 / A12253. 1 / ISP 5477) (Streptomyces tenebrarius).